A 190-amino-acid chain; its full sequence is Peptidyl-prolyl cis-trans isomerase A (190 aa).

The first 24 residues, 1–24 (MFKSTLAAMAAVFALSALSPAAMA), serve as a signal peptide directing secretion. Positions 27-188 (GDPHVLLTTS…KPVVILSAKV (162 aa)) constitute a PPIase cyclophilin-type domain.

This sequence belongs to the cyclophilin-type PPIase family.

The protein resides in the periplasm. It carries out the reaction [protein]-peptidylproline (omega=180) = [protein]-peptidylproline (omega=0). Functionally, PPIases accelerate the folding of proteins. It catalyzes the cis-trans isomerization of proline imidic peptide bonds in oligopeptides. This Escherichia coli O157:H7 protein is Peptidyl-prolyl cis-trans isomerase A (ppiA).